The primary structure comprises 398 residues: Tryptophan synthase beta chain (398 aa).

Lysine 88 carries the post-translational modification N6-(pyridoxal phosphate)lysine.

It belongs to the TrpB family. As to quaternary structure, tetramer of two alpha and two beta chains. The cofactor is pyridoxal 5'-phosphate.

The catalysed reaction is (1S,2R)-1-C-(indol-3-yl)glycerol 3-phosphate + L-serine = D-glyceraldehyde 3-phosphate + L-tryptophan + H2O. It functions in the pathway amino-acid biosynthesis; L-tryptophan biosynthesis; L-tryptophan from chorismate: step 5/5. Functionally, the beta subunit is responsible for the synthesis of L-tryptophan from indole and L-serine. This is Tryptophan synthase beta chain from Haemophilus influenzae (strain PittGG).